The sequence spans 196 residues: Small ribosomal subunit protein uS4m (196 aa).

One can recognise an S4 RNA-binding domain in the interval 88–154 (KRLDVILVRL…FKSNIRKNFQ (67 aa)).

Belongs to the universal ribosomal protein uS4 family.

The protein resides in the mitochondrion. The polypeptide is Small ribosomal subunit protein uS4m (RPS4) (Marchantia polymorpha (Common liverwort)).